The primary structure comprises 380 residues: Nucleoporin Nup43 (380 aa).

Residue Met-1 is modified to N-acetylmethionine. WD repeat units follow at residues Phe-8–Ser-57, Arg-72–Ser-110, His-119–Thr-166, Ala-170–Cys-208, Gly-215–Ser-255, and Ala-259–Ser-299.

Component of the Nup107-160 subcomplex of the nuclear pore complex (NPC). The Nup107-160 subcomplex includes NUP160, NUP133, NUP107, NUP98, NUP85, NUP43, NUP37, SEH1 and SEC13.

The protein resides in the chromosome. Its subcellular location is the centromere. It localises to the kinetochore. It is found in the nucleus. The protein localises to the nuclear pore complex. In terms of biological role, component of the Nup107-160 subcomplex of the nuclear pore complex (NPC). The Nup107-160 subcomplex is required for the assembly of a functional NPC. The Nup107-160 subcomplex is also required for normal kinetochore microtubule attachment, mitotic progression and chromosome segregation. The protein is Nucleoporin Nup43 (Nup43) of Mus musculus (Mouse).